Consider the following 412-residue polypeptide: Tyrosine--tRNA ligase 1 (412 aa).

Residue Tyr41 coordinates L-tyrosine. The 'HIGH' region signature appears at Ala46–His55. Residues Tyr174 and Gln178 each contribute to the L-tyrosine site. The 'KMSKS' region signature appears at Lys234–Ser238. Lys237 contributes to the ATP binding site. The region spanning Leu348–Glu411 is the S4 RNA-binding domain.

This sequence belongs to the class-I aminoacyl-tRNA synthetase family. TyrS type 1 subfamily. As to quaternary structure, homodimer.

The protein localises to the cytoplasm. The enzyme catalyses tRNA(Tyr) + L-tyrosine + ATP = L-tyrosyl-tRNA(Tyr) + AMP + diphosphate + H(+). In terms of biological role, catalyzes the attachment of tyrosine to tRNA(Tyr) in a two-step reaction: tyrosine is first activated by ATP to form Tyr-AMP and then transferred to the acceptor end of tRNA(Tyr). The sequence is that of Tyrosine--tRNA ligase 1 from Pseudomonas aeruginosa (strain ATCC 15692 / DSM 22644 / CIP 104116 / JCM 14847 / LMG 12228 / 1C / PRS 101 / PAO1).